Consider the following 306-residue polypeptide: MRGMVSFAVWALFAALLSQQLFASVASVRFEDAKTYYLSPPSGSHGTPPSHTPPSSNCGSPPYDPSPSTPSHPSPPSHTPTPSTPSHTPTPHTPSHTPTPHTPPCNCGSPPSHPSTPSHPSTPSHPTPSHPPSGGYYSSPPPRTPVVVTPPSPIVDPGTPIIGGSPPTPIIDPGTPGTPFIPAPFPPITGTCDYWRNHPTLIWGLLGWWGTVGGAFGTVSIPSSIPGFDPHMNLLQALSNTRSDPIGALYREGTASWLNSMVNHKFPFTTPQVRDHFVAGLSSNKAATKQAHTFKLANEGRLKPRV.

An N-terminal signal peptide occupies residues 1-23 (MRGMVSFAVWALFAALLSQQLFA). Over residues 40-56 (PPSGSHGTPPSHTPPSS) the composition is skewed to low complexity. The tract at residues 40–156 (PPSGSHGTPP…VVTPPSPIVD (117 aa)) is disordered. Pro residues predominate over residues 62 to 83 (PYDPSPSTPSHPSPPSHTPTPS). Residues 84–99 (TPSHTPTPHTPSHTPT) show a composition bias toward low complexity. Positions 139–154 (SPPPRTPVVVTPPSPI) are enriched in pro residues.

Confined to the shoot apical meristem (SAM) at the layer L1 in vegetative, infloresence and floral meristems, as well as in protoderm of organ primordia, including during embryogenesis. Also present in the tip of emerging lateral root primordia.

Its function is as follows. May be involved in the regulation of meristem growth. In Arabidopsis thaliana (Mouse-ear cress), this protein is Protodermal factor 1 (PDF1).